Reading from the N-terminus, the 554-residue chain is Carboxypeptidase Y homolog A (554 aa).

A signal peptide spans 1–17; the sequence is MRVAASTVLLGVASAAS. Residues 18 to 137 constitute a propeptide that is removed on maturation; that stretch reads FQQQTQHVLS…KLADFNLRVK (120 aa). Disulfide bonds link C191–C431, C325–C339, C349–C372, C356–C365, and C394–C401. The N-linked (GlcNAc...) asparagine glycan is linked to N222. S278 is an active-site residue. The active site involves D470. N518 is a glycosylation site (N-linked (GlcNAc...) asparagine). The active site involves H529.

This sequence belongs to the peptidase S10 family.

Its subcellular location is the vacuole. It catalyses the reaction Release of a C-terminal amino acid with broad specificity.. In terms of biological role, vacuolar carboxypeptidase involved in degradation of small peptides. Digests preferentially peptides containing an aliphatic or hydrophobic residue in P1' position, as well as methionine, leucine or phenylalanine in P1 position of ester substrate. The polypeptide is Carboxypeptidase Y homolog A (CPYA) (Podospora anserina (strain S / ATCC MYA-4624 / DSM 980 / FGSC 10383) (Pleurage anserina)).